A 251-amino-acid polypeptide reads, in one-letter code: Zinc import ATP-binding protein ZnuC (251 aa).

Residues 5-220 (VSLENVSVSF…PEFISMFGPR (216 aa)) form the ABC transporter domain. 37-44 (GPNGAGKS) is a binding site for ATP.

Belongs to the ABC transporter superfamily. Zinc importer (TC 3.A.1.15.5) family. As to quaternary structure, the complex is composed of two ATP-binding proteins (ZnuC), two transmembrane proteins (ZnuB) and a solute-binding protein (ZnuA).

The protein resides in the cell inner membrane. It carries out the reaction Zn(2+)(out) + ATP(in) + H2O(in) = Zn(2+)(in) + ADP(in) + phosphate(in) + H(+)(in). Part of the ABC transporter complex ZnuABC involved in zinc import. Responsible for energy coupling to the transport system. Seems to be important for the virulence. This is Zinc import ATP-binding protein ZnuC from Salmonella typhimurium (strain LT2 / SGSC1412 / ATCC 700720).